Reading from the N-terminus, the 67-residue chain is Large ribosomal subunit protein uL29 (67 aa).

The protein belongs to the universal ribosomal protein uL29 family.

The polypeptide is Large ribosomal subunit protein uL29 (Rhizorhabdus wittichii (strain DSM 6014 / CCUG 31198 / JCM 15750 / NBRC 105917 / EY 4224 / RW1) (Sphingomonas wittichii)).